The chain runs to 393 residues: NAD(P)H-quinone oxidoreductase subunit H, chloroplastic (393 aa).

Belongs to the complex I 49 kDa subunit family. NDH is composed of at least 16 different subunits, 5 of which are encoded in the nucleus.

It localises to the plastid. It is found in the chloroplast thylakoid membrane. The catalysed reaction is a plastoquinone + NADH + (n+1) H(+)(in) = a plastoquinol + NAD(+) + n H(+)(out). It catalyses the reaction a plastoquinone + NADPH + (n+1) H(+)(in) = a plastoquinol + NADP(+) + n H(+)(out). Its function is as follows. NDH shuttles electrons from NAD(P)H:plastoquinone, via FMN and iron-sulfur (Fe-S) centers, to quinones in the photosynthetic chain and possibly in a chloroplast respiratory chain. The immediate electron acceptor for the enzyme in this species is believed to be plastoquinone. Couples the redox reaction to proton translocation, and thus conserves the redox energy in a proton gradient. This is NAD(P)H-quinone oxidoreductase subunit H, chloroplastic from Cryptomeria japonica (Japanese cedar).